A 252-amino-acid chain; its full sequence is MQYPVDTHTHTVASTHAYSTIHDYLAVAKQKGIRLFATTDHGPAMADAPHFWHFVNLRVLPRMVDGVGILRGIEANIKNREGEIDYFGDYLSQLDIVLAGFHEPVFPPSDKATHTEAMINAIKSGKVDIITHPGNPAYPIDIEAVAAAAAEYGVALEINNSSFEVSRKGSEANCTAIAKAAKELGATLVMGSDSHVAFSLGGFDRALSIIEAVDYPKDKLLNRSPMALLNFLAQRGHKSVADLMPLFSDDIA.

9 residues coordinate Zn(2+): His8, His10, His16, His41, Glu74, His102, His132, Asp193, and His195.

It belongs to the PHP family. Requires Zn(2+) as cofactor.

This Shewanella sp. (strain MR-4) protein is Probable phosphatase Shewmr4_2619.